The following is a 99-amino-acid chain: Cystatin (99 aa).

The region spanning 3-99 (GGLSPRSVSD…EEKLCGFQVW (97 aa)) is the Cystatin domain. A Secondary area of contact motif is present at residues 47–51 (QSVAG). A disulfide bridge connects residues Cys-65 and Cys-81.

This sequence belongs to the cystatin family. Expressed by the venom gland.

It is found in the secreted. Functionally, inhibits various C1 cysteine proteases including cathepsin L (Ki is 0.1 nM), papain (Ki is 0.19 nM), cathepsin S (Ki is 1.2 nM), and cathepsin B (Ki is 2.5 nM). This protein has no toxic activity and its function in the venom is unknown. It may play a role as housekeeping or regulatory protein. The protein is Cystatin of Naja atra (Chinese cobra).